A 181-amino-acid chain; its full sequence is Inner membrane-spanning protein YciB (181 aa).

5 consecutive transmembrane segments (helical) span residues 10–30 (LVIFFAVYKFFDIYIASGALI), 50–70 (MHLITFAMVTVFGTLTLVFHD), 72–92 (AFIKWKVTIIYALFALALGVS), 118–138 (VTWYWVSFFAICGLVNIYVAF), and 148–168 (FKVFGLTALTLINTVITVFYL).

The protein belongs to the YciB family.

It localises to the cell inner membrane. Its function is as follows. Plays a role in cell envelope biogenesis, maintenance of cell envelope integrity and membrane homeostasis. In Shewanella oneidensis (strain ATCC 700550 / JCM 31522 / CIP 106686 / LMG 19005 / NCIMB 14063 / MR-1), this protein is Inner membrane-spanning protein YciB.